Reading from the N-terminus, the 952-residue chain is Ubiquitin carboxyl-terminal hydrolase 15 (952 aa).

Position 2 is an N-acetylalanine (alanine 2). Residues 2 to 223 form a mediates interaction with SART3 region; it reads AEGGAADLDT…KNEDGTWPRG (222 aa). The DUSP domain maps to 7 to 118; it reads ADLDTQRSDI…GQEPIARKVV (112 aa). The USP domain occupies 260–904; that stretch reads CGLSNLGNTC…AAYVLFYQRQ (645 aa). Cysteine 269 (nucleophile) is an active-site residue. Threonine 573 is subject to Phosphothreonine. Residues 597–665 are disordered; sequence ETDGPLRCCE…GGDNDSENGL (69 aa). Residues 627–644 show a composition bias toward acidic residues; sequence METDEPDDESSQDQELPS. Histidine 862 (proton acceptor) is an active-site residue. Positions 923-952 are disordered; sequence SAATGVPLESDEDSNDNDNDLENENCMHTN. A compositionally biased stretch (acidic residues) spans 931-945; that stretch reads ESDEDSNDNDNDLEN. Serine 932 and serine 936 each carry phosphoserine.

The protein belongs to the peptidase C19 family. As to quaternary structure, a homodimer structure has been reported; however it is unclear whether the protein form a homodimer in vivo. Identified in a complex with the COP9 signalosome complex (CSN). Interacts with SMAD1, SMAD2 and SMAD3; the interaction is direct. Forms a complex with SMURF2 and SMAD7. Interacts with TGFBR1. Interacts with SART3; the interaction is direct. May interact with RNF20 and RNF40. May interact with PRKN. Interacts with INCA1. Post-translationally, phosphorylated. Phosphorylation protects against ubiquitination and subsequent degradation by the proteasome. Ubiquitinated, leading to degradation by the proteasome. Highly expressed in testis and spleen, and at lower level in other tissues.

It localises to the cytoplasm. The protein resides in the nucleus. The protein localises to the mitochondrion. The enzyme catalyses Thiol-dependent hydrolysis of ester, thioester, amide, peptide and isopeptide bonds formed by the C-terminal Gly of ubiquitin (a 76-residue protein attached to proteins as an intracellular targeting signal).. In terms of biological role, hydrolase that removes conjugated ubiquitin from target proteins and regulates various pathways such as the TGF-beta receptor signaling, NF-kappa-B and RNF41/NRDP1-PRKN pathways. Acts as a key regulator of TGF-beta receptor signaling pathway, but the precise mechanism is still unclear: according to a report, acts by promoting deubiquitination of monoubiquitinated R-SMADs (SMAD1, SMAD2 and/or SMAD3), thereby alleviating inhibition of R-SMADs and promoting activation of TGF-beta target genes. According to another reports, regulates the TGF-beta receptor signaling pathway by mediating deubiquitination and stabilization of TGFBR1, leading to an enhanced TGF-beta signal. Able to mediate deubiquitination of monoubiquitinated substrates, 'Lys-27'-, 'Lys-48'- and 'Lys-63'-linked polyubiquitin chains. May also regulate gene expression and/or DNA repair through the deubiquitination of histone H2B. Acts as an inhibitor of mitophagy by counteracting the action of parkin (PRKN): hydrolyzes cleavage of 'Lys-48'- and 'Lys-63'-linked polyubiquitin chains attached by parkin on target proteins such as MFN2, thereby reducing parkin's ability to drive mitophagy. Acts as an associated component of COP9 signalosome complex (CSN) and regulates different pathways via this association: regulates NF-kappa-B by mediating deubiquitination of NFKBIA and deubiquitinates substrates bound to VCP. Involved in endosome organization by mediating deubiquitination of SQSTM1: ubiquitinated SQSTM1 forms a molecular bridge that restrains cognate vesicles in the perinuclear region and its deubiquitination releases target vesicles for fast transport into the cell periphery. Acts as a negative regulator of antifungal immunity by mediating 'Lys-27'-linked deubiquitination of CARD9, thereby inactivating CARD9. In Rattus norvegicus (Rat), this protein is Ubiquitin carboxyl-terminal hydrolase 15 (Usp15).